A 336-amino-acid polypeptide reads, in one-letter code: Fructose-1,6-bisphosphatase class 1 (336 aa).

4 residues coordinate Mg(2+): E90, D112, L114, and D115. Substrate contacts are provided by residues 115 to 118 (DGSS), N211, and K277. E283 contributes to the Mg(2+) binding site.

The protein belongs to the FBPase class 1 family. In terms of assembly, homotetramer. Requires Mg(2+) as cofactor.

Its subcellular location is the cytoplasm. It carries out the reaction beta-D-fructose 1,6-bisphosphate + H2O = beta-D-fructose 6-phosphate + phosphate. The protein operates within carbohydrate biosynthesis; gluconeogenesis. This Pseudomonas fluorescens (strain SBW25) protein is Fructose-1,6-bisphosphatase class 1.